The following is a 175-amino-acid chain: Endoribonuclease YbeY (175 aa).

His-129, His-133, and His-139 together coordinate Zn(2+).

It belongs to the endoribonuclease YbeY family. Requires Zn(2+) as cofactor.

It is found in the cytoplasm. Its function is as follows. Single strand-specific metallo-endoribonuclease involved in late-stage 70S ribosome quality control and in maturation of the 3' terminus of the 16S rRNA. In Lactobacillus johnsonii (strain CNCM I-12250 / La1 / NCC 533), this protein is Endoribonuclease YbeY.